The primary structure comprises 91 residues: Probable translocation protein y4yM (91 aa).

Transmembrane regions (helical) follow at residues 15-35 (VVFM…GLTI) and 55-75 (LLVV…PLIE).

It belongs to the FliQ/MopD/SpaQ family.

It is found in the cell membrane. Functionally, could be involved in the secretion of an unknown factor. The polypeptide is Probable translocation protein y4yM (Sinorhizobium fredii (strain NBRC 101917 / NGR234)).